Here is a 141-residue protein sequence, read N- to C-terminus: UPF0225 protein Rmet_0111 (141 aa).

The protein belongs to the UPF0225 family.

The polypeptide is UPF0225 protein Rmet_0111 (Cupriavidus metallidurans (strain ATCC 43123 / DSM 2839 / NBRC 102507 / CH34) (Ralstonia metallidurans)).